The chain runs to 245 residues: Ribonuclease PH (245 aa).

Phosphate-binding positions include arginine 93 and 131 to 133 (GTR).

Belongs to the RNase PH family. In terms of assembly, homohexameric ring arranged as a trimer of dimers.

The catalysed reaction is tRNA(n+1) + phosphate = tRNA(n) + a ribonucleoside 5'-diphosphate. Phosphorolytic 3'-5' exoribonuclease that plays an important role in tRNA 3'-end maturation. Removes nucleotide residues following the 3'-CCA terminus of tRNAs; can also add nucleotides to the ends of RNA molecules by using nucleoside diphosphates as substrates, but this may not be physiologically important. Probably plays a role in initiation of 16S rRNA degradation (leading to ribosome degradation) during starvation. The polypeptide is Ribonuclease PH (Corynebacterium glutamicum (strain R)).